We begin with the raw amino-acid sequence, 244 residues long: Tetraspanin-1 (244 aa).

The next 4 helical transmembrane spans lie at 11–31 (VLFFLDLAMLLAALALIAVGF), 67–87 (LIVVFWSIIGLSLGAVVTAVL), 104–124 (YLVLIIVLVSLEIGCGVAVLV), and 198–218 (ILLVILILQTIAIILPVPILI).

The protein belongs to the tetraspanin (TM4SF) family.

It is found in the membrane. The polypeptide is Tetraspanin-1 (tsp-1) (Caenorhabditis elegans).